The sequence spans 60 residues: MFTLKKPLLLLFFLATINLSLCEQERNAEEERRDEPDERNAEVEKRFLPIVGKLLSLFGK.

A signal peptide spans 1–22 (MFTLKKPLLLLFFLATINLSLC). Residues 23–44 (EQERNAEEERRDEPDERNAEVE) constitute a propeptide, removed in mature form. F58 is subject to Phenylalanine amide.

It belongs to the frog skin active peptide (FSAP) family. Temporin subfamily. Expressed by the skin glands.

It is found in the secreted. Antimicrobial peptide. The protein is Temporin-MT5 of Amolops mantzorum (Sichuan torrent frog).